We begin with the raw amino-acid sequence, 220 residues long: Probable nicotinate-nucleotide adenylyltransferase (220 aa).

It belongs to the NadD family.

It carries out the reaction nicotinate beta-D-ribonucleotide + ATP + H(+) = deamido-NAD(+) + diphosphate. It functions in the pathway cofactor biosynthesis; NAD(+) biosynthesis; deamido-NAD(+) from nicotinate D-ribonucleotide: step 1/1. Catalyzes the reversible adenylation of nicotinate mononucleotide (NaMN) to nicotinic acid adenine dinucleotide (NaAD). The sequence is that of Probable nicotinate-nucleotide adenylyltransferase from Saccharophagus degradans (strain 2-40 / ATCC 43961 / DSM 17024).